An 816-amino-acid polypeptide reads, in one-letter code: Leucine--tRNA ligase (816 aa).

The 'HIGH' region signature appears at 40–51 (SYPSGAQLHAGH). Residues 576–580 (KMSKS) carry the 'KMSKS' region motif. Lys579 provides a ligand contact to ATP.

It belongs to the class-I aminoacyl-tRNA synthetase family.

The protein resides in the cytoplasm. The catalysed reaction is tRNA(Leu) + L-leucine + ATP = L-leucyl-tRNA(Leu) + AMP + diphosphate. The sequence is that of Leucine--tRNA ligase from Clostridium beijerinckii (strain ATCC 51743 / NCIMB 8052) (Clostridium acetobutylicum).